A 161-amino-acid polypeptide reads, in one-letter code: 3-isopropylmalate dehydratase small subunit (161 aa).

This sequence belongs to the LeuD family. LeuD type 2 subfamily. Heterodimer of LeuC and LeuD.

It carries out the reaction (2R,3S)-3-isopropylmalate = (2S)-2-isopropylmalate. The protein operates within amino-acid biosynthesis; L-leucine biosynthesis; L-leucine from 3-methyl-2-oxobutanoate: step 2/4. Functionally, catalyzes the isomerization between 2-isopropylmalate and 3-isopropylmalate, via the formation of 2-isopropylmaleate. In Pyrobaculum islandicum (strain DSM 4184 / JCM 9189 / GEO3), this protein is 3-isopropylmalate dehydratase small subunit.